A 392-amino-acid chain; its full sequence is MEDMMKQILEKLNTIEKNISETNIRIEKIEKEQELKRKVELYGKEPEKKLHKENIEKLSSSIEDKIIQNIDKKLKKIENVEEQYQWKNIVKINKPLSVGEKYMENFKKILVYLGEKHPKLEELYSLTDYNKLVADIYTDRNLVISAYNYGLLQVLYIEHPSQLELFDENIKLAYMKFRNVTKAQLIYMRIYSAMAEPYDKGVIPKIEIIKFGITYSKLKYDEVYEHQPIEKLDLKKFISQKRALGILVIQKEIENLNGNVWLYSNLDGRLILSNHNKAENVEVKNILSDWSKKLSIPEGNYPRCSIKNPMFTGKTMEVLCELSKKQINMRHICNLCSKMKNVQIQDPILPEYEEEYVEIEKEEPGEEKNLEDVSTDDNNEKKKIRSVIVKET.

A coiled-coil region spans residues 1-88 (MEDMMKQILE…NVEEQYQWKN (88 aa)). The segment at 358 to 392 (EIEKEEPGEEKNLEDVSTDDNNEKKKIRSVIVKET) is disordered.

It belongs to the caulimoviridae viroplasmin family.

It is found in the host cytoplasm. Functionally, enhances the translation of downstream ORFs on polycistronic mRNAs derived from cassava vein mosaic virus. This chain is Putative transactivator/viroplasmin protein, found in Cassava vein mosaic virus (CsVMV).